Here is a 208-residue protein sequence, read N- to C-terminus: Uracil phosphoribosyltransferase (208 aa).

Residues Arg-78, Arg-103, and 130-138 (DPMLATGGS) contribute to the 5-phospho-alpha-D-ribose 1-diphosphate site. Uracil contacts are provided by residues Ile-193 and 198–200 (GDA). Asp-199 is a 5-phospho-alpha-D-ribose 1-diphosphate binding site.

The protein belongs to the UPRTase family. Mg(2+) serves as cofactor.

It carries out the reaction UMP + diphosphate = 5-phospho-alpha-D-ribose 1-diphosphate + uracil. It participates in pyrimidine metabolism; UMP biosynthesis via salvage pathway; UMP from uracil: step 1/1. Allosterically activated by GTP. Catalyzes the conversion of uracil and 5-phospho-alpha-D-ribose 1-diphosphate (PRPP) to UMP and diphosphate. The chain is Uracil phosphoribosyltransferase from Aliivibrio fischeri (strain MJ11) (Vibrio fischeri).